Here is a 340-residue protein sequence, read N- to C-terminus: Probable dual-specificity RNA methyltransferase RlmN (340 aa).

The active-site Proton acceptor is E91. One can recognise a Radical SAM core domain in the interval 97–326 (HSGRVTACIS…CEIRKEKGTD (230 aa)). The cysteines at positions 104 and 331 are disulfide-linked. C111, C115, and C118 together coordinate [4Fe-4S] cluster. S-adenosyl-L-methionine contacts are provided by residues 158–159 (GE), S190, 213–215 (SLH), and N289. Catalysis depends on C331, which acts as the S-methylcysteine intermediate.

It belongs to the radical SAM superfamily. RlmN family. It depends on [4Fe-4S] cluster as a cofactor.

The protein localises to the cytoplasm. It catalyses the reaction adenosine(2503) in 23S rRNA + 2 reduced [2Fe-2S]-[ferredoxin] + 2 S-adenosyl-L-methionine = 2-methyladenosine(2503) in 23S rRNA + 5'-deoxyadenosine + L-methionine + 2 oxidized [2Fe-2S]-[ferredoxin] + S-adenosyl-L-homocysteine. The enzyme catalyses adenosine(37) in tRNA + 2 reduced [2Fe-2S]-[ferredoxin] + 2 S-adenosyl-L-methionine = 2-methyladenosine(37) in tRNA + 5'-deoxyadenosine + L-methionine + 2 oxidized [2Fe-2S]-[ferredoxin] + S-adenosyl-L-homocysteine. In terms of biological role, specifically methylates position 2 of adenine 2503 in 23S rRNA and position 2 of adenine 37 in tRNAs. The chain is Probable dual-specificity RNA methyltransferase RlmN from Thermosipho melanesiensis (strain DSM 12029 / CIP 104789 / BI429).